The chain runs to 291 residues: ATP synthase gamma chain (291 aa).

This sequence belongs to the ATPase gamma chain family. In terms of assembly, F-type ATPases have 2 components, CF(1) - the catalytic core - and CF(0) - the membrane proton channel. CF(1) has five subunits: alpha(3), beta(3), gamma(1), delta(1), epsilon(1). CF(0) has three main subunits: a, b and c.

It localises to the cell inner membrane. Its function is as follows. Produces ATP from ADP in the presence of a proton gradient across the membrane. The gamma chain is believed to be important in regulating ATPase activity and the flow of protons through the CF(0) complex. The polypeptide is ATP synthase gamma chain (Rhodopseudomonas palustris (strain BisB5)).